A 220-amino-acid polypeptide reads, in one-letter code: UPF0502 protein CV_4303 (220 aa).

This sequence belongs to the UPF0502 family.

The polypeptide is UPF0502 protein CV_4303 (Chromobacterium violaceum (strain ATCC 12472 / DSM 30191 / JCM 1249 / CCUG 213 / NBRC 12614 / NCIMB 9131 / NCTC 9757 / MK)).